The primary structure comprises 217 residues: Cytochrome c biogenesis ATP-binding export protein CcmA (217 aa).

An ABC transporter domain is found at 6-216 (LQLEQLACQR…QYKFFDQGNM (211 aa)). Position 38-45 (38-45 (GHNGIGKT)) interacts with ATP.

Belongs to the ABC transporter superfamily. CcmA exporter (TC 3.A.1.107) family. The complex is composed of two ATP-binding proteins (CcmA) and two transmembrane proteins (CcmB).

It localises to the cell inner membrane. The catalysed reaction is heme b(in) + ATP + H2O = heme b(out) + ADP + phosphate + H(+). Its function is as follows. Part of the ABC transporter complex CcmAB involved in the biogenesis of c-type cytochromes; once thought to export heme, this seems not to be the case, but its exact role is uncertain. Responsible for energy coupling to the transport system. The polypeptide is Cytochrome c biogenesis ATP-binding export protein CcmA (Histophilus somni (strain 129Pt) (Haemophilus somnus)).